A 297-amino-acid polypeptide reads, in one-letter code: Small ribosomal subunit biogenesis GTPase RsgA (297 aa).

A CP-type G domain is found at 65 to 223 (INEIGRPAVA…IADTPGFSAI (159 aa)). GTP is bound by residues 114–117 (SKSD) and 166–174 (GQSGAGKST). 4 residues coordinate Zn(2+): Cys247, Cys252, His254, and Cys260.

This sequence belongs to the TRAFAC class YlqF/YawG GTPase family. RsgA subfamily. As to quaternary structure, monomer. Associates with 30S ribosomal subunit, binds 16S rRNA. Requires Zn(2+) as cofactor.

The protein localises to the cytoplasm. In terms of biological role, one of several proteins that assist in the late maturation steps of the functional core of the 30S ribosomal subunit. Helps release RbfA from mature subunits. May play a role in the assembly of ribosomal proteins into the subunit. Circularly permuted GTPase that catalyzes slow GTP hydrolysis, GTPase activity is stimulated by the 30S ribosomal subunit. In Lactobacillus johnsonii (strain CNCM I-12250 / La1 / NCC 533), this protein is Small ribosomal subunit biogenesis GTPase RsgA.